Here is a 122-residue protein sequence, read N- to C-terminus: Large ribosomal subunit protein uL14 (122 aa).

Belongs to the universal ribosomal protein uL14 family. In terms of assembly, part of the 50S ribosomal subunit. Forms a cluster with proteins L3 and L19. In the 70S ribosome, L14 and L19 interact and together make contacts with the 16S rRNA in bridges B5 and B8.

In terms of biological role, binds to 23S rRNA. Forms part of two intersubunit bridges in the 70S ribosome. This Cyanothece sp. (strain PCC 7425 / ATCC 29141) protein is Large ribosomal subunit protein uL14.